Reading from the N-terminus, the 1165-residue chain is Linoleate diol synthase (1165 aa).

The segment at threonine 104–valine 448 is fatty acid alpha-dioxygenase. Heme b is bound at residue histidine 203. Residues aspartate 204, serine 219, tyrosine 221, aspartate 223, and serine 225 each coordinate Ca(2+). Residue tyrosine 376 is part of the active site. Histidine 379 contacts heme b. An epoxy alcohol synthase region spans residues glutamate 666–glycine 1161. Cysteine 1080 serves as a coordination point for heme. The disordered stretch occupies residues arginine 1114–tryptophan 1134.

Belongs to the peroxidase family. Homotetramer. Requires heme b as cofactor. It depends on Ca(2+) as a cofactor. Heme serves as cofactor. In terms of processing, the N-terminus is blocked.

The catalysed reaction is (9Z,12Z)-octadecadienoate + O2 = (8R,9Z,12Z)-8-hydroperoxyoctadeca-9,12-dienoate. It catalyses the reaction (8R,9Z,12Z)-8-hydroperoxyoctadeca-9,12-dienoate = (7S,8S,9Z,12Z)-7,8-dihydroxyoctadeca-9,12-dienoate. Functionally, 7,8-linoleate diol synthase is a bifunctional enzyme that converts linoleic acid (18:2n-6) into 8-hydroperoxy-8(E),12(Z)-octadecadienoic acid (8-HPODE) and then catalyzes the isomerization of the resulting hydroperoxide to 7,8-dihydroxy-9(Z),12(Z)-octadecadienoic acid (7,8-DiHODE). The sequence is that of Linoleate diol synthase from Gaeumannomyces graminis (Turf grass take-all root rot fungus).